We begin with the raw amino-acid sequence, 919 residues long: Isoleucine--tRNA ligase (919 aa).

Positions 57–67 (PYANGHIHIGT) match the 'HIGH' region motif. Glu-553 provides a ligand contact to L-isoleucyl-5'-AMP. The 'KMSKS' region signature appears at 594 to 598 (KMSKS). Residue Lys-597 coordinates ATP. Residues Cys-887, Cys-890, Cys-907, and Cys-910 each contribute to the Zn(2+) site.

Belongs to the class-I aminoacyl-tRNA synthetase family. IleS type 1 subfamily. In terms of assembly, monomer. It depends on Zn(2+) as a cofactor.

Its subcellular location is the cytoplasm. It carries out the reaction tRNA(Ile) + L-isoleucine + ATP = L-isoleucyl-tRNA(Ile) + AMP + diphosphate. In terms of biological role, catalyzes the attachment of isoleucine to tRNA(Ile). As IleRS can inadvertently accommodate and process structurally similar amino acids such as valine, to avoid such errors it has two additional distinct tRNA(Ile)-dependent editing activities. One activity is designated as 'pretransfer' editing and involves the hydrolysis of activated Val-AMP. The other activity is designated 'posttransfer' editing and involves deacylation of mischarged Val-tRNA(Ile). The sequence is that of Isoleucine--tRNA ligase from Thermotoga maritima (strain ATCC 43589 / DSM 3109 / JCM 10099 / NBRC 100826 / MSB8).